Consider the following 29-residue polypeptide: Cytolysin Oshem 1 (29 aa).

It localises to the secreted. It is found in the nematocyst. The protein resides in the target cell membrane. Its function is as follows. Cytolysin that shows moderate hemolysis and moderate myonecrosis. The polypeptide is Cytolysin Oshem 1 (Olindias sambaquiensis (Hydromedusa)).